Here is a 74-residue protein sequence, read N- to C-terminus: Protein SlyX homolog (74 aa).

Belongs to the SlyX family.

This is Protein SlyX homolog from Aliivibrio fischeri (strain ATCC 700601 / ES114) (Vibrio fischeri).